The chain runs to 37 residues: MVEPLLSGIVLGMITVSAFGLFVAAFLQYRRGNQFEI.

The chain crosses the membrane as a helical span at residues 5–25; it reads LLSGIVLGMITVSAFGLFVAA.

This sequence belongs to the PetG family. As to quaternary structure, the 4 large subunits of the cytochrome b6-f complex are cytochrome b6, subunit IV (17 kDa polypeptide, PetD), cytochrome f and the Rieske protein, while the 4 small subunits are PetG, PetL, PetM and PetN. The complex functions as a dimer.

It is found in the plastid. Its subcellular location is the chloroplast thylakoid membrane. Component of the cytochrome b6-f complex, which mediates electron transfer between photosystem II (PSII) and photosystem I (PSI), cyclic electron flow around PSI, and state transitions. PetG is required for either the stability or assembly of the cytochrome b6-f complex. In Thalassiosira pseudonana (Marine diatom), this protein is Cytochrome b6-f complex subunit 5.